Consider the following 1036-residue polypeptide: Serine/threonine-protein kinase ULK2 (1036 aa).

Residues tyrosine 9–leucine 271 enclose the Protein kinase domain. Residues valine 15–valine 23 and lysine 39 each bind ATP. Aspartate 131 (proton acceptor) is an active-site residue. 5 disordered regions span residues glutamate 319–cysteine 348, threonine 418–alanine 460, cysteine 491–serine 522, glutamine 540–tryptophan 588, and alanine 656–glutamate 695. Positions serine 335–cysteine 348 are enriched in low complexity. Residues threonine 418–histidine 428 are compositionally biased toward polar residues. Serine 430 bears the Phosphoserine mark. The span at arginine 504–leucine 521 shows a compositional bias: polar residues. Positions glutamine 659 to lysine 679 are enriched in polar residues. Serine 771 and serine 780 each carry phosphoserine. The segment at glutamate 812–valine 1036 is CTD-like region.

This sequence belongs to the protein kinase superfamily. Ser/Thr protein kinase family. APG1/unc-51/ULK1 subfamily. In terms of assembly, interacts with SYNGAP1. Component of a complex consisting of ATG13/KIAA0652, ULK1 and RB1CC1/FIP200. Interacts (via C-terminus) with ATG13/KIAA0652. Associates with the mammalian target of rapamycin complex 1 (mTORC1) through an interaction with RPTOR. Post-translationally, autophosphorylated. In response to nutrient limitation, probably phosphorylated and activated by AMPK, leading to activate autophagy.

The protein resides in the cytoplasmic vesicle membrane. It carries out the reaction L-seryl-[protein] + ATP = O-phospho-L-seryl-[protein] + ADP + H(+). The catalysed reaction is L-threonyl-[protein] + ATP = O-phospho-L-threonyl-[protein] + ADP + H(+). Its function is as follows. Serine/threonine-protein kinase involved in autophagy in response to starvation. Acts upstream of phosphatidylinositol 3-kinase PIK3C3 to regulate the formation of autophagophores, the precursors of autophagosomes. Part of regulatory feedback loops in autophagy: acts both as a downstream effector and a negative regulator of mammalian target of rapamycin complex 1 (mTORC1) via interaction with RPTOR. Activated via phosphorylation by AMPK, also acts as a negative regulator of AMPK through phosphorylation of the AMPK subunits PRKAA1, PRKAB2 and PRKAG1. May phosphorylate ATG13/KIAA0652, FRS2, FRS3 and RPTOR; however such data need additional evidences. Not involved in ammonia-induced autophagy or in autophagic response of cerebellar granule neurons (CGN) to low potassium concentration. Plays a role early in neuronal differentiation and is required for granule cell axon formation: may govern axon formation via Ras-like GTPase signaling and through regulation of the Rab5-mediated endocytic pathways within developing axons. In Homo sapiens (Human), this protein is Serine/threonine-protein kinase ULK2 (ULK2).